The sequence spans 880 residues: Pentatricopeptide repeat-containing protein At3g07290, mitochondrial (880 aa).

A mitochondrion-targeting transit peptide spans 1–89; that stretch reads MLLIHIRSTR…RSDNDICVRF (89 aa). PPR repeat units lie at residues 159 to 193, 194 to 228, 229 to 259, 265 to 299, 300 to 334, 335 to 369, 370 to 404, 405 to 439, 440 to 474, 475 to 509, 510 to 544, 545 to 579, 580 to 614, 615 to 649, 650 to 684, 685 to 721, 738 to 768, 772 to 806, and 807 to 842; these read NYPC…GFVV, GMID…GFVL, DSHI…MSKE, NSVS…GCQP, STRT…GCKP, NVHT…RIFP, SVIT…ACKP, NVRT…GLSP, DIVS…DIEP, DCLT…GISL, DEVT…RILT, TPHS…GLVP, SVVT…GCLP, NVYP…GVSP, NHVT…GYEL, NDRI…ETDP, ISGL…VLER, LEKA…GFVP, and SFKS…GVVE.

The protein belongs to the PPR family. P subfamily.

Its subcellular location is the mitochondrion. The polypeptide is Pentatricopeptide repeat-containing protein At3g07290, mitochondrial (Arabidopsis thaliana (Mouse-ear cress)).